We begin with the raw amino-acid sequence, 174 residues long: uncharacterized protein (174 aa).

It belongs to the archaeal NMN adenylyltransferase family.

This is an uncharacterized protein from Archaeoglobus fulgidus (strain ATCC 49558 / DSM 4304 / JCM 9628 / NBRC 100126 / VC-16).